Here is a 366-residue protein sequence, read N- to C-terminus: MGHLTLKDAVFLTITSIVGGGIFVLSPLTYLLFGKSIIWGWALLIFVSLIMASPFAYASTKISESGGVYKFVMKILGREIGVFSAYILWLSGVFALSGVVSFFEIVFNTKFNVSYVGLCLIVILTALILGGLRIVGNFVRIFGILTITIILYIVFSNGIKIDSIGEFNLKNAILTIYFGLWTATGWEGITMPLSAFKNQKAIAYGLLVGTFIIGVLYLLFSLTIVSLNVKTNNLDEILKILIGDNLFLLAGMLLIISSCAFSVLFTLSYMPYGMGKDRIFPKAFIKLRKEIPYYGVILNTLLVIILLIFDAKTLVDMSMFSTLIAYFLLYLAVFKESSGKIKAISLISMLITGLLILFRVYNFIIL.

Helical transmembrane passes span 14-34, 37-57, 87-107, 111-131, 141-161, 173-193, 205-225, 247-267, 291-311, 314-334, and 346-366; these read ITSIVGGGIFVLSPLTYLLFG, IIWGWALLIFVSLIMASPFAY, ILWLSGVFALSGVVSFFEIVF, FNVSYVGLCLIVILTALILGG, IFGILTITIILYIVFSNGIKI, ILTIYFGLWTATGWEGITMPL, GLLVGTFIIGVLYLLFSLTIV, FLLAGMLLIISSCAFSVLFTL, IPYYGVILNTLLVIILLIFDA, LVDMSMFSTLIAYFLLYLAVF, and LISMLITGLLILFRVYNFIIL.

The protein belongs to the amino acid-polyamine-organocation (APC) superfamily.

The protein localises to the cell membrane. This is Putative amino-acid transporter MJ1196 from Methanocaldococcus jannaschii (strain ATCC 43067 / DSM 2661 / JAL-1 / JCM 10045 / NBRC 100440) (Methanococcus jannaschii).